A 95-amino-acid chain; its full sequence is Aspartyl/glutamyl-tRNA(Asn/Gln) amidotransferase subunit C (95 aa).

The protein belongs to the GatC family. In terms of assembly, heterotrimer of A, B and C subunits.

The catalysed reaction is L-glutamyl-tRNA(Gln) + L-glutamine + ATP + H2O = L-glutaminyl-tRNA(Gln) + L-glutamate + ADP + phosphate + H(+). It catalyses the reaction L-aspartyl-tRNA(Asn) + L-glutamine + ATP + H2O = L-asparaginyl-tRNA(Asn) + L-glutamate + ADP + phosphate + 2 H(+). In terms of biological role, allows the formation of correctly charged Asn-tRNA(Asn) or Gln-tRNA(Gln) through the transamidation of misacylated Asp-tRNA(Asn) or Glu-tRNA(Gln) in organisms which lack either or both of asparaginyl-tRNA or glutaminyl-tRNA synthetases. The reaction takes place in the presence of glutamine and ATP through an activated phospho-Asp-tRNA(Asn) or phospho-Glu-tRNA(Gln). The chain is Aspartyl/glutamyl-tRNA(Asn/Gln) amidotransferase subunit C from Rhodopseudomonas palustris (strain ATCC BAA-98 / CGA009).